The sequence spans 338 residues: MDMQQAIRAVTQRIDLSEQEMTAVMGLIMNGEATPAQMGGFLVGLAMKGETVDEVTAAARVMRDLATRVEVQAGHLVDTCGTGGDASGSFNISTASALVVAAAGGRVAKHGNRSVSSKSGSADVLEAAGVNLDLSPEQVARCIEQVGVGFLFAPKHHGAMKHAVGPRREMGVRTLFNVLGPLTNPAGAPNQVLGVFSNRWLEPLARVLGRLGSRHVMVVHAEDGLDEISIGAPTRVAELRDGEVTVRLIAPEDFGMERADLSRIRVEDAAGSLAMIRGVLDGQPGPARDIVLLNAGAALYVADVAGSHAEGIEMAREAINSGAAAEKLQQLVSFTASC.

5-phospho-alpha-D-ribose 1-diphosphate-binding positions include Gly-81, 84 to 85, Ser-89, 91 to 94, 109 to 117, and Ser-121; these read GD, NIST, and KHGNRSVSS. Gly-81 contacts anthranilate. Ser-93 contacts Mg(2+). Asn-112 is a binding site for anthranilate. Arg-167 lines the anthranilate pocket. 2 residues coordinate Mg(2+): Asp-226 and Glu-227.

Belongs to the anthranilate phosphoribosyltransferase family. In terms of assembly, homodimer. It depends on Mg(2+) as a cofactor.

The enzyme catalyses N-(5-phospho-beta-D-ribosyl)anthranilate + diphosphate = 5-phospho-alpha-D-ribose 1-diphosphate + anthranilate. It functions in the pathway amino-acid biosynthesis; L-tryptophan biosynthesis; L-tryptophan from chorismate: step 2/5. Catalyzes the transfer of the phosphoribosyl group of 5-phosphorylribose-1-pyrophosphate (PRPP) to anthranilate to yield N-(5'-phosphoribosyl)-anthranilate (PRA). This chain is Anthranilate phosphoribosyltransferase, found in Thioalkalivibrio sulfidiphilus (strain HL-EbGR7).